A 443-amino-acid chain; its full sequence is Ribosomal protein uS12 methylthiotransferase RimO (443 aa).

Residues Pro-9–Pro-119 form the MTTase N-terminal domain. Residues Cys-18, Cys-54, Cys-83, Cys-150, Cys-154, and Cys-157 each coordinate [4Fe-4S] cluster. The Radical SAM core domain occupies Leu-136 to Ala-373. The 68-residue stretch at Gln-376 to Ser-443 folds into the TRAM domain.

It belongs to the methylthiotransferase family. RimO subfamily. The cofactor is [4Fe-4S] cluster.

The protein resides in the cytoplasm. It carries out the reaction L-aspartate(89)-[ribosomal protein uS12]-hydrogen + (sulfur carrier)-SH + AH2 + 2 S-adenosyl-L-methionine = 3-methylsulfanyl-L-aspartate(89)-[ribosomal protein uS12]-hydrogen + (sulfur carrier)-H + 5'-deoxyadenosine + L-methionine + A + S-adenosyl-L-homocysteine + 2 H(+). Its function is as follows. Catalyzes the methylthiolation of an aspartic acid residue of ribosomal protein uS12. This Zymomonas mobilis subsp. mobilis (strain ATCC 31821 / ZM4 / CP4) protein is Ribosomal protein uS12 methylthiotransferase RimO.